The chain runs to 232 residues: MPKRGKKYQEALKQFDREKSYDPNEAVVLVKKTATAKFDETIEAHIKLGVDSRHADQQVRGAIVLPHGTGKTAKVLVFAKGEKVTEAEKAGADYVGSDDLVAKIQGENWFDFDVVVATPDMMGVVGRLGRVLGPKGLMPNPKSGTVTFDLERAVKEIKAGKVEYRLDKTNIIHVPIGKASFEEAQLAENFKTLLEAVAKAKPAAAKGQYFKSVSVTSTMGPGIRVNPSKVSE.

This sequence belongs to the universal ribosomal protein uL1 family. Part of the 50S ribosomal subunit.

In terms of biological role, binds directly to 23S rRNA. The L1 stalk is quite mobile in the ribosome, and is involved in E site tRNA release. Its function is as follows. Protein L1 is also a translational repressor protein, it controls the translation of the L11 operon by binding to its mRNA. The chain is Large ribosomal subunit protein uL1 from Alkaliphilus metalliredigens (strain QYMF).